The chain runs to 235 residues: Exotoxin type C (235 aa).

A signal peptide spans 1 to 27; sequence MKKINIIKIVFIITVILISTISPIIKS. Zn(2+) contacts are provided by His-194, His-228, and Asp-230.

Belongs to the staphylococcal/streptococcal toxin family.

Its function is as follows. Superantigen that acts as a causative agent of the symptoms associated with scarlet fever. Has been associated with streptococcal toxic shock-like disease and may play a role in the early events of rheumatic fever. Superantigens cross-link major histocompatibility complex (MHC) class II and T-cell receptor (TCR) molecules, resulting in an overstimulation of T-cells associated with a massive release of pyrogenic and inflammatory cytokines. The protein is Exotoxin type C of Streptococcus pyogenes serotype M18 (strain MGAS8232).